The primary structure comprises 547 residues: Chaperonin GroEL (547 aa).

Residues 30–33 (TLGP), Lys-51, 87–91 (DGTTT), Gly-415, and Asp-495 contribute to the ATP site.

Belongs to the chaperonin (HSP60) family. In terms of assembly, forms a cylinder of 14 subunits composed of two heptameric rings stacked back-to-back. Interacts with the co-chaperonin GroES.

Its subcellular location is the cytoplasm. The enzyme catalyses ATP + H2O + a folded polypeptide = ADP + phosphate + an unfolded polypeptide.. Its function is as follows. Together with its co-chaperonin GroES, plays an essential role in assisting protein folding. The GroEL-GroES system forms a nano-cage that allows encapsulation of the non-native substrate proteins and provides a physical environment optimized to promote and accelerate protein folding. The chain is Chaperonin GroEL from Shewanella pealeana (strain ATCC 700345 / ANG-SQ1).